The chain runs to 283 residues: Isochorismatase domain-containing protein 1 (283 aa).

The protein belongs to the isochorismatase family.

The protein is Isochorismatase domain-containing protein 1 (isoc1) of Danio rerio (Zebrafish).